The chain runs to 421 residues: Serine--tRNA ligase (421 aa).

An L-serine-binding site is contributed by 229 to 231 (TAE). Position 260–262 (260–262 (RSE)) interacts with ATP. L-serine is bound at residue glutamate 283. Residue 347 to 350 (EISS) participates in ATP binding. Position 382 (serine 382) interacts with L-serine.

This sequence belongs to the class-II aminoacyl-tRNA synthetase family. Type-1 seryl-tRNA synthetase subfamily. As to quaternary structure, homodimer. The tRNA molecule binds across the dimer.

Its subcellular location is the cytoplasm. It carries out the reaction tRNA(Ser) + L-serine + ATP = L-seryl-tRNA(Ser) + AMP + diphosphate + H(+). The enzyme catalyses tRNA(Sec) + L-serine + ATP = L-seryl-tRNA(Sec) + AMP + diphosphate + H(+). It participates in aminoacyl-tRNA biosynthesis; selenocysteinyl-tRNA(Sec) biosynthesis; L-seryl-tRNA(Sec) from L-serine and tRNA(Sec): step 1/1. Functionally, catalyzes the attachment of serine to tRNA(Ser). Is also able to aminoacylate tRNA(Sec) with serine, to form the misacylated tRNA L-seryl-tRNA(Sec), which will be further converted into selenocysteinyl-tRNA(Sec). This is Serine--tRNA ligase from Symbiobacterium thermophilum (strain DSM 24528 / JCM 14929 / IAM 14863 / T).